Reading from the N-terminus, the 142-residue chain is Large ribosomal subunit protein uL11 (142 aa).

It belongs to the universal ribosomal protein uL11 family. Part of the ribosomal stalk of the 50S ribosomal subunit. Interacts with L10 and the large rRNA to form the base of the stalk. L10 forms an elongated spine to which L12 dimers bind in a sequential fashion forming a multimeric L10(L12)X complex. One or more lysine residues are methylated.

In terms of biological role, forms part of the ribosomal stalk which helps the ribosome interact with GTP-bound translation factors. The polypeptide is Large ribosomal subunit protein uL11 (Bartonella bacilliformis (strain ATCC 35685 / KC583 / Herrer 020/F12,63)).